Consider the following 251-residue polypeptide: Carbohydrate deacetylase (251 aa).

Positions 59 and 122 each coordinate Mg(2+).

The protein belongs to the YdjC deacetylase family. In terms of assembly, homodimer. The cofactor is Mg(2+).

Its function is as follows. Probably catalyzes the deacetylation of acetylated carbohydrates an important step in the degradation of oligosaccharides. The protein is Carbohydrate deacetylase of Vibrio parahaemolyticus serotype O3:K6 (strain RIMD 2210633).